We begin with the raw amino-acid sequence, 57 residues long: UPF0434 protein Shal_2504 (57 aa).

The protein belongs to the UPF0434 family.

In Shewanella halifaxensis (strain HAW-EB4), this protein is UPF0434 protein Shal_2504.